A 526-amino-acid chain; its full sequence is MSVIKRALISLSDKAGAVEFAQNLHKLGVEILSTGGTAKLLADAGVPVIEVADYTGFPEMLDGRVKTLHPKIHGGILGRRDLDEHVAKMEEHGIGNIDLVCVNLYPFAATIAKPGCTLEDAIENIDIGGPAMVRSAAKNWKHVAIVTDTADFPAIAAELEANNGALSDKTRFNLSRKAFSHTAQYDGMISNYLTSLSDDVLSGQPQIGEFPSRFNQSWIKVQDMRYGENPHQRAAFYRDIDPAAGSLSAYNQLQGKELSYNNIADADAAWEAVKSFDAPACVIVKHANPCGVAVAADTLTAYKLAYATDTTSAFGGIIAFNREVDGETVKQITDNQFMEVLMAPKFTAEALEIAAAKKNVRVLEVPLKAGANRFELKRVGGGLLVQTPDINRINRADLKVVSKRQPTEQEWNDLLFVWNVAKYVKSNAIVFGKGGQTYGIGAGQMSRVDSTRIAARKAQDAGLDLNGACAASDAFFPFRDGVDVIAEQGIKAIIHPAGSMRDQEVFDAADEHGIAMAVTGIRHFRH.

In terms of domain architecture, MGS-like spans 1–147 (MSVIKRALIS…KNWKHVAIVT (147 aa)).

This sequence belongs to the PurH family.

It catalyses the reaction (6R)-10-formyltetrahydrofolate + 5-amino-1-(5-phospho-beta-D-ribosyl)imidazole-4-carboxamide = 5-formamido-1-(5-phospho-D-ribosyl)imidazole-4-carboxamide + (6S)-5,6,7,8-tetrahydrofolate. The catalysed reaction is IMP + H2O = 5-formamido-1-(5-phospho-D-ribosyl)imidazole-4-carboxamide. Its pathway is purine metabolism; IMP biosynthesis via de novo pathway; 5-formamido-1-(5-phospho-D-ribosyl)imidazole-4-carboxamide from 5-amino-1-(5-phospho-D-ribosyl)imidazole-4-carboxamide (10-formyl THF route): step 1/1. It participates in purine metabolism; IMP biosynthesis via de novo pathway; IMP from 5-formamido-1-(5-phospho-D-ribosyl)imidazole-4-carboxamide: step 1/1. In Neisseria gonorrhoeae (strain NCCP11945), this protein is Bifunctional purine biosynthesis protein PurH.